The chain runs to 245 residues: Sugar fermentation stimulation protein homolog (245 aa).

Belongs to the SfsA family.

This chain is Sugar fermentation stimulation protein homolog, found in Yersinia pseudotuberculosis serotype I (strain IP32953).